The following is a 143-amino-acid chain: Putative pre-16S rRNA nuclease (143 aa).

This sequence belongs to the YqgF nuclease family.

The protein localises to the cytoplasm. Could be a nuclease involved in processing of the 5'-end of pre-16S rRNA. This Lactobacillus gasseri (strain ATCC 33323 / DSM 20243 / BCRC 14619 / CIP 102991 / JCM 1131 / KCTC 3163 / NCIMB 11718 / NCTC 13722 / AM63) protein is Putative pre-16S rRNA nuclease.